Reading from the N-terminus, the 708-residue chain is MSERGIKWACEYCTYENWPSAIKCTMCRAQRPSGTIITEDPFKSGSSDVGRDWDPSSTEGGSSPLICPDSSARPRVKSSYSMENANKWSCHMCTYLNWPRAIRCTQCLSQRRTRSPTESPQSSGSGSRPVAFSVDPCEEYNDRNKLNTRTQHWTCSICTYENWAKAKKCVVCDHPRPNNIEAIEFAETEEASSIINEQDRARWRGSCSSGNSQRRSPPTMKRDSEVKMDFQRIELAGAVGSKEELEVDFKKLKQIKNRMKKTDWLFLNACVGVVEGDLAAIEAYKSSGGDIARQLTADEVRLLNRPSAFDVGYTLVHLAIRFQRQDMLAILLTEVSQQAAKCIPAMVCPELTEQIRREIAASLHQRKGDFACYFLTDLVTFTLPADIEDLPPTVQEKLFDEVLDRDVQKELEEESPIINWSLELATRLDSRLYALWNRTAGDCLLDSVLQATWGIYDKDSVLRKALHDSLHDCSHWFYTRWKDWESWYSQSFGLHFSLREEQWQEDWAFILSLASQPGASLEQTHIFVLAHILRRPIIVYGVKYYKSFRGETLGYTRFQGVYLPLLWEQSFCWKSPIALGYTRGHFSALVAMENDGYGNRGAGANLNTDDDVTITFLPLVDSERKLLHVHFLSAQELGNEEQQEKLLREWLDCCVTEGGVLVAMQKSSRRRNHPLVTQMVEKWLDRYRQIRPCTSLSDGEEDEDDEDE.

The RanBP2-type 1 zinc-finger motif lies at 3-33 (ERGIKWACEYCTYENWPSAIKCTMCRAQRPS). The Zn(2+) site is built by cysteine 10, cysteine 13, cysteine 24, and cysteine 27. The disordered stretch occupies residues 38–73 (TEDPFKSGSSDVGRDWDPSSTEGGSSPLICPDSSAR). 2 consecutive RanBP2-type zinc fingers follow at residues 84–113 (NANK…QRRT) and 149–178 (RTQH…PRPN). The Zn(2+) site is built by cysteine 90, cysteine 93, cysteine 104, cysteine 107, cysteine 155, cysteine 158, cysteine 169, and cysteine 172. The disordered stretch occupies residues 200–223 (RARWRGSCSSGNSQRRSPPTMKRD). Positions 206–216 (SCSSGNSQRRS) are enriched in polar residues. ANK repeat units lie at residues 260 to 290 (KKTD…SGGD) and 313 to 340 (YTLV…QQAA). Residues 432–592 (LYALWNRTAG…RGHFSALVAM (161 aa)) form the OTU domain. Cysteine 443 (nucleophile) is an active-site residue. Catalysis depends on histidine 585, which acts as the Proton acceptor.

It belongs to the peptidase C64 family. Interacts with TRAF6. Interacts with APC.

It localises to the cytoplasm. It is found in the nucleus. The enzyme catalyses Thiol-dependent hydrolysis of ester, thioester, amide, peptide and isopeptide bonds formed by the C-terminal Gly of ubiquitin (a 76-residue protein attached to proteins as an intracellular targeting signal).. Its function is as follows. Ubiquitin thioesterase, which specifically hydrolyzes 'Lys-29'-linked and 'Lys-33'-linked diubiquitin. Also cleaves 'Lys-63'-linked chains, but with 40-fold less efficiency compared to 'Lys-29'-linked ones. Positive regulator of the Wnt signaling pathway that deubiquitinates APC protein, a negative regulator of Wnt-mediated transcription. Acts as a regulator of autophagy by mediating deubiquitination of PIK3C3/VPS34, thereby promoting autophagosome maturation. Plays a role in the regulation of cell morphology and cytoskeletal organization. Required in the stress fiber dynamics and cell migration. This Bos taurus (Bovine) protein is Ubiquitin thioesterase ZRANB1.